Reading from the N-terminus, the 292-residue chain is Elongation factor Ts (292 aa).

The tract at residues 79–82 (TDFV) is involved in Mg(2+) ion dislocation from EF-Tu.

This sequence belongs to the EF-Ts family.

Its subcellular location is the cytoplasm. Functionally, associates with the EF-Tu.GDP complex and induces the exchange of GDP to GTP. It remains bound to the aminoacyl-tRNA.EF-Tu.GTP complex up to the GTP hydrolysis stage on the ribosome. The protein is Elongation factor Ts of Staphylococcus haemolyticus (strain JCSC1435).